We begin with the raw amino-acid sequence, 1134 residues long: DNA damage-binding protein 1 (1134 aa).

This sequence belongs to the DDB1 family. In terms of assembly, interacts with cdt-1 and cul-4. As to expression, expressed at high levels in the spermatheca of adult hermaphrodites.

It is found in the cytoplasm. Its subcellular location is the nucleus. It participates in protein modification; protein ubiquitination. In terms of biological role, plays a role in DNA repair. May be a component of an E3 ubiquitin-protein ligase which promotes histone ubiquitination in response to UV irradiation. Histone ubiquitination may be important for subsequent DNA repair. Promotes the degradation of the replication licensing factor cdt-1 during S-phase, thereby preventing rereplication of DNA during a single round of cell division. The chain is DNA damage-binding protein 1 (ddb-1) from Caenorhabditis elegans.